Reading from the N-terminus, the 281-residue chain is Probable feruloyl esterase A (281 aa).

Residues 1 to 21 form the signal peptide; sequence MKNFFSMHAILLACSAGAGLA. Intrachain disulfides connect cysteine 50–cysteine 279, cysteine 112–cysteine 115, and cysteine 248–cysteine 255. Aspartate 98 contributes to the substrate binding site. Residue asparagine 100 is glycosylated (N-linked (GlcNAc...) asparagine). Tyrosine 101 contacts substrate. Serine 154 functions as the Nucleophile in the catalytic mechanism. An N-linked (GlcNAc...) asparagine glycan is attached at asparagine 173. Catalysis depends on aspartate 215, which acts as the Charge relay system. Histidine 268 lines the substrate pocket. Residue histidine 268 is the Charge relay system of the active site.

The protein belongs to the AB hydrolase superfamily. FaeA family.

Its subcellular location is the secreted. It catalyses the reaction feruloyl-polysaccharide + H2O = ferulate + polysaccharide.. In terms of biological role, involved in degradation of plant cell walls. Hydrolyzes the feruloyl-arabinose ester bond in arabinoxylans, and the feruloyl-galactose ester bond in pectin. The polypeptide is Probable feruloyl esterase A (faeA) (Aspergillus oryzae (strain ATCC 42149 / RIB 40) (Yellow koji mold)).